The chain runs to 91 residues: Small ribosomal subunit protein uS15 (91 aa).

Belongs to the universal ribosomal protein uS15 family. In terms of assembly, part of the 30S ribosomal subunit. Forms a bridge to the 50S subunit in the 70S ribosome, contacting the 23S rRNA.

In terms of biological role, one of the primary rRNA binding proteins, it binds directly to 16S rRNA where it helps nucleate assembly of the platform of the 30S subunit by binding and bridging several RNA helices of the 16S rRNA. Its function is as follows. Forms an intersubunit bridge (bridge B4) with the 23S rRNA of the 50S subunit in the ribosome. The polypeptide is Small ribosomal subunit protein uS15 (Rickettsia africae (strain ESF-5)).